Consider the following 499-residue polypeptide: Glutathione reductase, cytosolic (499 aa).

FAD is bound by residues serine 35, glycine 36, glutamate 55, threonine 72, cysteine 73, and lysine 81. Serine 35 lines the glutathione pocket. Cysteine 73 and cysteine 78 are oxidised to a cystine. Tyrosine 130 provides a ligand contact to glutathione. FAD is bound at residue glycine 146. NADP(+) contacts are provided by glycine 211, isoleucine 214, glutamate 217, arginine 234, arginine 240, and glycine 297. FAD contacts are provided by aspartate 338 and threonine 346. Alanine 376 is an NADP(+) binding site. Histidine 472 is an FAD binding site. Catalysis depends on histidine 472, which acts as the Proton acceptor.

The protein belongs to the class-I pyridine nucleotide-disulfide oxidoreductase family. In terms of assembly, homodimer. FAD serves as cofactor.

The protein localises to the cytoplasm. The catalysed reaction is 2 glutathione + NADP(+) = glutathione disulfide + NADPH + H(+). Catalyzes the reduction of glutathione disulfide (GSSG) to reduced glutathione (GSH). Constitutes the major mechanism to maintain a high GSH:GSSG ratio in the cytosol. The chain is Glutathione reductase, cytosolic from Arabidopsis thaliana (Mouse-ear cress).